Here is a 569-residue protein sequence, read N- to C-terminus: Urease subunit alpha (569 aa).

In terms of domain architecture, Urease spans 131–569 (GGIDSHIHFI…LPLAQRYFLF (439 aa)). The Ni(2+) site is built by His136, His138, and Lys219. Residue Lys219 is modified to N6-carboxylysine. His221 lines the substrate pocket. Positions 248 and 274 each coordinate Ni(2+). The Proton donor role is filled by His322. Asp362 contacts Ni(2+).

Belongs to the metallo-dependent hydrolases superfamily. Urease alpha subunit family. As to quaternary structure, heterotrimer of UreA (gamma), UreB (beta) and UreC (alpha) subunits. Three heterotrimers associate to form the active enzyme. It depends on Ni cation as a cofactor. Post-translationally, carboxylation allows a single lysine to coordinate two nickel ions.

Its subcellular location is the cytoplasm. It catalyses the reaction urea + 2 H2O + H(+) = hydrogencarbonate + 2 NH4(+). Its pathway is nitrogen metabolism; urea degradation; CO(2) and NH(3) from urea (urease route): step 1/1. In Herpetosiphon aurantiacus (strain ATCC 23779 / DSM 785 / 114-95), this protein is Urease subunit alpha.